A 184-amino-acid chain; its full sequence is Photosystem I assembly protein Ycf4 (184 aa).

2 helical membrane passes run 22-42 (FCWACILFLGSIGFLLVGISS) and 57-77 (ILFFPQGIVMCFYGIAGLFIS).

This sequence belongs to the Ycf4 family.

It is found in the plastid. It localises to the chloroplast thylakoid membrane. Seems to be required for the assembly of the photosystem I complex. In Illicium oligandrum (Star anise), this protein is Photosystem I assembly protein Ycf4.